The chain runs to 803 residues: MKISISWLREFLPNFSCETVSLVERLTFLGFEVEGVEESASLDRRIVVGRVLETEPHPNAERLTLCLVDVGREEPLRIVCGAPNVRAGMVVPVATEKAKLQFPDGQTLTIKPSKIRGERSQGMICAADELGLSNDHSGVMELESSWEIGKPFADYLESDVVLDIAVTPNRPDVLSHLGIARELADGAPLQYPSQQSLTYQPAGERIAINDAVACPYYTGVIIRGVTIRESPEWLRKRLQAIGLNPKNNIVDITNYMLHALGQPMHAFDCAKLAGERIAVRSDCQAEVVALNNLTYKVEGGMPVICDGSGAIAAIAGVMGGMASAVTESTTDIFLESALFHPSMVRRTAKKLALASDSSYRFERGVDSRMVQQASATAVALILELAGGTVECAMEQGSVAADLQLLALRPERTNKLLGTALSGEQMVELLERIGFRCVEQTTEQLLFAVPSFRVDVTAEIDLIEEVARLYGYNAIESSRQMATIYPTKRQHPAYFPDFLRGELITLGFREILTNPLIKRNDAALASEQLVDVLNPISEGLEVLRPSLLPGLLKVISHNIRHGNRDQKLFEVAHVFEAKPQVQQTQQPLEGYCEQERLVMAITGSRYLRRWNHPTDMVDFYDLSGAVEMLLEQLNILDKSVVNIYTPSALSIDVFLTEKGKRTTHRLGIMQPVNAAWLKHFDIEQEVYCAELDVALLERCYQPTSAYEPPSRFPVVERDISFIIPEGVSAQSLVELVQSSNPLIKTVTVFDRFERNHESGKECSIALSLTIADAKATLQDEKINDILATISRNAESKLGAVIRQV.

The region spanning 40-153 (ASLDRRIVVG…SSWEIGKPFA (114 aa)) is the tRNA-binding domain. Positions 400-476 (ADLQLLALRP…RLYGYNAIES (77 aa)) constitute a B5 domain. Residues D454, D460, E463, and E464 each coordinate Mg(2+). The FDX-ACB domain maps to 709-801 (SRFPVVERDI…AESKLGAVIR (93 aa)).

This sequence belongs to the phenylalanyl-tRNA synthetase beta subunit family. Type 1 subfamily. Tetramer of two alpha and two beta subunits. Requires Mg(2+) as cofactor.

It localises to the cytoplasm. The catalysed reaction is tRNA(Phe) + L-phenylalanine + ATP = L-phenylalanyl-tRNA(Phe) + AMP + diphosphate + H(+). The sequence is that of Phenylalanine--tRNA ligase beta subunit from Chlorobium chlorochromatii (strain CaD3).